The primary structure comprises 185 residues: Ribosome-recycling factor (185 aa).

It belongs to the RRF family.

It is found in the cytoplasm. Functionally, responsible for the release of ribosomes from messenger RNA at the termination of protein biosynthesis. May increase the efficiency of translation by recycling ribosomes from one round of translation to another. This chain is Ribosome-recycling factor, found in Bacillus mycoides (strain KBAB4) (Bacillus weihenstephanensis).